We begin with the raw amino-acid sequence, 787 residues long: Putative pentatricopeptide repeat-containing protein At1g69350, mitochondrial (787 aa).

A mitochondrion-targeting transit peptide spans 1–16 (MTQYMPLFRSCSSLRL). 19 PPR repeats span residues 33–63 (DPLP…FPYP), 64–98 (DSFM…TTQI), 99–134 (SKFV…GVDD), 135–165 (DAVI…MPVR), 166–200 (DLVA…GVEP), 201–235 (DAVT…MFDL), 236–266 (DETL…IAKK), 267–301 (NAVS…GIEP), 302–336 (NLVT…ELDP), 338–368 (YESL…VSDR), 369–403 (NIVA…RIKP), 404–434 (DAFT…VIRT), 438–468 (DEFV…IKHR), 469–503 (SVVT…YLEM), 504–534 (NEVT…LIIS), 538–568 (DLFT…MSSR), 569–603 (SIVS…GTKP), 604–638 (NEVV…GVSP), and 639–669 (NSEH…MPFL). The tract at residues 674-749 (VWGSLVNGCR…VPGYSAIEID (76 aa)) is type E motif. The type E(+) motif stretch occupies residues 750-780 (QKVFRFGAGEENRIQTDEIYRFLGNLQNLTN).

Belongs to the PPR family. PCMP-E subfamily.

The protein resides in the mitochondrion. The protein is Putative pentatricopeptide repeat-containing protein At1g69350, mitochondrial (PCMP-E66) of Arabidopsis thaliana (Mouse-ear cress).